Reading from the N-terminus, the 225-residue chain is 7-cyano-7-deazaguanine synthase (225 aa).

10–20 is an ATP binding site; that stretch reads VSGGLDSTTVI. Positions 189, 199, 202, and 205 each coordinate Zn(2+).

This sequence belongs to the QueC family. The cofactor is Zn(2+).

The enzyme catalyses 7-carboxy-7-deazaguanine + NH4(+) + ATP = 7-cyano-7-deazaguanine + ADP + phosphate + H2O + H(+). Its pathway is purine metabolism; 7-cyano-7-deazaguanine biosynthesis. Functionally, catalyzes the ATP-dependent conversion of 7-carboxy-7-deazaguanine (CDG) to 7-cyano-7-deazaguanine (preQ(0)). This is 7-cyano-7-deazaguanine synthase from Cellvibrio japonicus (strain Ueda107) (Pseudomonas fluorescens subsp. cellulosa).